The sequence spans 488 residues: Malonate-semialdehyde dehydrogenase (488 aa).

7 residues coordinate NAD(+): Ala150, Phe152, Lys176, Glu179, Arg180, Ser229, and Thr251. The active-site Nucleophile is the Cys284. Glu382 is a binding site for NAD(+).

Belongs to the aldehyde dehydrogenase family. IolA subfamily. Homotetramer.

The enzyme catalyses 3-oxopropanoate + NAD(+) + CoA + H2O = hydrogencarbonate + acetyl-CoA + NADH + H(+). It catalyses the reaction 2-methyl-3-oxopropanoate + NAD(+) + CoA + H2O = propanoyl-CoA + hydrogencarbonate + NADH + H(+). It participates in polyol metabolism; myo-inositol degradation into acetyl-CoA; acetyl-CoA from myo-inositol: step 7/7. Catalyzes the oxidation of malonate semialdehyde (MSA) and methylmalonate semialdehyde (MMSA) into acetyl-CoA and propanoyl-CoA, respectively. Is involved in a myo-inositol catabolic pathway. Bicarbonate, and not CO2, is the end-product of the enzymatic reaction. The chain is Malonate-semialdehyde dehydrogenase from Listeria monocytogenes serovar 1/2a (strain ATCC BAA-679 / EGD-e).